A 292-amino-acid chain; its full sequence is Mitochondrial fission regulator 1-like (292 aa).

T30 carries the post-translational modification Phosphothreonine. S41 bears the Phosphoserine mark. S103 carries the phosphoserine; by AMPK modification. Residues S110, S224, and S225 each carry the phosphoserine modification. Phosphoserine; by AMPK is present on S238. Phosphoserine is present on residues S261 and S273.

The protein belongs to the MTFR1 family. Post-translationally, phosphorylated by AMPK. Upon stress, phosphorylation at Ser-103 and Ser-238 by AMPK is sufficient to induce mitochondrial fragmentation.

The protein localises to the mitochondrion outer membrane. Its function is as follows. Mitochondrial protein required for adaptation of miochondrial dynamics to metabolic changes. Regulates mitochondrial morphology at steady state and mediates AMPK-dependent stress-induced mitochondrial fragmentation via the control of OPA1 levels. In Homo sapiens (Human), this protein is Mitochondrial fission regulator 1-like.